We begin with the raw amino-acid sequence, 270 residues long: Putative hydro-lyase Reut_A2449 (270 aa).

Belongs to the D-glutamate cyclase family.

The polypeptide is Putative hydro-lyase Reut_A2449 (Cupriavidus pinatubonensis (strain JMP 134 / LMG 1197) (Cupriavidus necator (strain JMP 134))).